A 145-amino-acid polypeptide reads, in one-letter code: 3-hydroxyacyl-[acyl-carrier-protein] dehydratase FabZ (145 aa).

The active site involves histidine 47.

The protein belongs to the thioester dehydratase family. FabZ subfamily.

It is found in the cytoplasm. It catalyses the reaction a (3R)-hydroxyacyl-[ACP] = a (2E)-enoyl-[ACP] + H2O. Functionally, involved in unsaturated fatty acids biosynthesis. Catalyzes the dehydration of short chain beta-hydroxyacyl-ACPs and long chain saturated and unsaturated beta-hydroxyacyl-ACPs. The protein is 3-hydroxyacyl-[acyl-carrier-protein] dehydratase FabZ of Geotalea uraniireducens (strain Rf4) (Geobacter uraniireducens).